We begin with the raw amino-acid sequence, 311 residues long: Probable manganese-dependent inorganic pyrophosphatase (311 aa).

Residues H9, D13, D15, D77, H99, and D151 each contribute to the Mn(2+) site.

It belongs to the PPase class C family. The cofactor is Mn(2+).

The protein localises to the cytoplasm. It catalyses the reaction diphosphate + H2O = 2 phosphate + H(+). The polypeptide is Probable manganese-dependent inorganic pyrophosphatase (Streptococcus sanguinis (strain SK36)).